The chain runs to 303 residues: N-acetyl-D-glucosamine kinase (303 aa).

Residues 4-11 (GFDIGGTK) and 133-140 (GVGGGLIF) contribute to the ATP site. Histidine 157, cysteine 177, cysteine 179, and cysteine 184 together coordinate Zn(2+).

The protein belongs to the ROK (NagC/XylR) family. NagK subfamily.

It catalyses the reaction N-acetyl-D-glucosamine + ATP = N-acetyl-D-glucosamine 6-phosphate + ADP + H(+). It functions in the pathway cell wall biogenesis; peptidoglycan recycling. Its function is as follows. Catalyzes the phosphorylation of N-acetyl-D-glucosamine (GlcNAc) derived from cell-wall degradation, yielding GlcNAc-6-P. In Shigella boydii serotype 4 (strain Sb227), this protein is N-acetyl-D-glucosamine kinase.